We begin with the raw amino-acid sequence, 173 residues long: Zinc finger A20 and AN1 domain-containing stress-associated protein 2 (173 aa).

Residues 12–46 (PEGPKLCTNNCGFFGSAATMNMCSKCHKDMLFQQE) form an A20-type zinc finger. Zn(2+)-binding residues include Cys-18, Cys-22, Cys-34, Cys-37, Cys-114, Cys-117, Cys-128, Cys-130, Cys-135, His-138, His-144, and Cys-146. Residues 108–154 (PKGPSRCTTCNKRVGLTGFKCRCGSLFCGTHRYADVHDCSFNYHAAA) form an AN1-type zinc finger.

In terms of biological role, may be involved in environmental stress response. This is Zinc finger A20 and AN1 domain-containing stress-associated protein 2 (SAP2) from Arabidopsis thaliana (Mouse-ear cress).